The chain runs to 347 residues: Phenylalanine--tRNA ligase alpha subunit (347 aa).

A Mg(2+)-binding site is contributed by Glu-261.

This sequence belongs to the class-II aminoacyl-tRNA synthetase family. Phe-tRNA synthetase alpha subunit type 1 subfamily. Tetramer of two alpha and two beta subunits. The cofactor is Mg(2+).

It is found in the cytoplasm. It catalyses the reaction tRNA(Phe) + L-phenylalanine + ATP = L-phenylalanyl-tRNA(Phe) + AMP + diphosphate + H(+). In Streptococcus pyogenes serotype M18 (strain MGAS8232), this protein is Phenylalanine--tRNA ligase alpha subunit.